Here is a 935-residue protein sequence, read N- to C-terminus: C-1-tetrahydrofolate synthase, cytoplasmic (935 aa).

An N-acetylmethionine modification is found at Met-1. The segment at 2-291 (APAGILNGKV…MLMQSTVESA (290 aa)) is methylenetetrahydrofolate dehydrogenase and methenyltetrahydrofolate cyclohydrolase (D/C) domain. Substrate-binding positions include 52-56 (YINVK) and 99-101 (VQL). The active site involves Lys-56. NADP(+) is bound by residues 172–174 (GRS) and Ser-197. 272–276 (PGGVG) provides a ligand contact to substrate. The interval 310-935 (LNLKTPVPSD…PETEQVNGLF (626 aa)) is formyltetrahydrofolate synthetase domain. Residue Ser-318 is modified to Phosphoserine. 380 to 387 (TPLGEGKS) provides a ligand contact to ATP. Phosphoserine is present on residues Ser-413 and Ser-490.

It in the N-terminal section; belongs to the tetrahydrofolate dehydrogenase/cyclohydrolase family. The protein in the C-terminal section; belongs to the formate--tetrahydrofolate ligase family. Homodimer.

The protein resides in the cytoplasm. The enzyme catalyses (6R)-5,10-methylene-5,6,7,8-tetrahydrofolate + NADP(+) = (6R)-5,10-methenyltetrahydrofolate + NADPH. It catalyses the reaction (6R)-5,10-methenyltetrahydrofolate + H2O = (6R)-10-formyltetrahydrofolate + H(+). The catalysed reaction is (6S)-5,6,7,8-tetrahydrofolate + formate + ATP = (6R)-10-formyltetrahydrofolate + ADP + phosphate. The protein operates within one-carbon metabolism; tetrahydrofolate interconversion. Trifunctional enzyme that catalyzes the interconversion of three forms of one-carbon-substituted tetrahydrofolate: (6R)-5,10-methylene-5,6,7,8-tetrahydrofolate, 5,10-methenyltetrahydrofolate and (6S)-10-formyltetrahydrofolate. These derivatives of tetrahydrofolate are differentially required in nucleotide and amino acid biosynthesis, (6S)-10-formyltetrahydrofolate being required for purine biosynthesis while (6R)-5,10-methylene-5,6,7,8-tetrahydrofolate is used for serine and methionine biosynthesis for instance. This is C-1-tetrahydrofolate synthase, cytoplasmic (Mthfd1) from Rattus norvegicus (Rat).